The primary structure comprises 217 residues: Large ribosomal subunit protein uL4 (217 aa).

Belongs to the universal ribosomal protein uL4 family. Part of the 50S ribosomal subunit.

Functionally, one of the primary rRNA binding proteins, this protein initially binds near the 5'-end of the 23S rRNA. It is important during the early stages of 50S assembly. It makes multiple contacts with different domains of the 23S rRNA in the assembled 50S subunit and ribosome. Its function is as follows. Forms part of the polypeptide exit tunnel. The chain is Large ribosomal subunit protein uL4 from Koribacter versatilis (strain Ellin345).